Reading from the N-terminus, the 266-residue chain is Early E1A protein (266 aa).

Residues 39 to 47 (PSLYELYDL) are interaction with RB1 in competition with E2F1. Positions 75–145 (EGLFLPEPPV…AAAAADRERE (71 aa)) are interaction with UBE2I. Residues 98–102 (PQLHP) carry the PXLXP motif, interaction with host ZMYND11 motif. The LXCXE motif, interaction with host RB1 and TMEM173/STING signature appears at 107 to 111 (LLCYE). Residues 159 to 179 (CKSCEHHRNSTGNTDLMCSLC) fold into a zinc finger. Positions 195 to 226 (NEPEPNSTLDGDERPSPPKLGSAVPEGVIKPV) are disordered. A PXDLS motif, CTBP-binding motif is present at residues 255–259 (PVDLS). The Nuclear localization signal motif lies at 261–265 (KRPRC).

It belongs to the adenoviridae E1A protein family. In terms of assembly, interacts with host UBE2I; this interaction interferes with polySUMOylation. Interacts with host RB1; this interaction induces the aberrant dissociation of RB1-E2F1 complex thereby disrupting the activity of RB1 and activating E2F1-regulated genes. Interacts with host ATF7; the interaction enhances ATF7-mediated viral transactivation activity which requires the zinc binding domains of both proteins. Isoform early E1A 32 kDa protein and isoform early E1A 26 kDa protein interact (via N-terminus) with CUL1 and E3 ubiquitin ligase RBX1; these interactions inhibit RBX1-CUL1-dependent elongation reaction of ubiquitin chains and attenuate ubiquitination of SCF(FBXW7) target proteins. Interacts (via PXLXP motif) with host ZMYND11/BS69 (via MYND-type zinc finger); this interaction inhibits E1A mediated transactivation. Interacts with host EP300; this interaction stimulates the acetylation of RB1 by recruiting EP300 and RB1 into a multimeric-protein complex. Interacts with host CTBP1 and CTBP2; this interaction seems to potentiate viral replication. Interacts with host DCAF7. Interacts with host DYRK1A. Interacts with host KPNA4; this interaction allows E1A import into the host nucleus. Interacts with host EP400; this interaction stabilizes MYC. Interacts with host TBP protein; this interaction probably disrupts the TBP-TATA complex. Interacts (via LXCXE motif) with host TMEM173/STING; this interaction impairs the ability of TMEM173/STING to sense cytosolic DNA and promote the production of type I interferon (IFN-alpha and IFN-beta). Interacts (via C-terminus) with host ZBED1/hDREF (via C-terminus); the interaction is direct.

The protein resides in the host nucleus. Functionally, plays a role in viral genome replication by driving entry of quiescent cells into the cell cycle. Stimulation of progression from G1 to S phase allows the virus to efficiently use the cellular DNA replicating machinery to achieve viral genome replication. E1A protein has both transforming and trans-activating activities. Induces the disassembly of the E2F1 transcription factor from RB1 by direct competition for the same binding site on RB1, with subsequent transcriptional activation of E2F1-regulated S-phase genes and of the E2 region of the adenoviral genome. Release of E2F1 leads to the ARF-mediated inhibition of MDM2 and causes TP53/p53 to accumulate because it is not targeted for degradation by MDM2-mediated ubiquitination anymore. This increase in TP53, in turn, would arrest the cell proliferation and direct its death but this effect is counteracted by the viral protein E1B-55K. Inactivation of the ability of RB1 to arrest the cell cycle is critical for cellular transformation, uncontrolled cellular growth and proliferation induced by viral infection. Interaction with RBX1 and CUL1 inhibits ubiquitination of the proteins targeted by SCF(FBXW7) ubiquitin ligase complex, and may be linked to unregulated host cell proliferation. The tumorigenesis-restraining activity of E1A may be related to the disruption of the host CtBP-CtIP complex through the CtBP binding motif. Interaction with host TMEM173/STING impairs the ability of TMEM173/STING to sense cytosolic DNA and promote the production of type I interferon (IFN-alpha and IFN-beta). Promotes the sumoylation of host ZBED1/hDREF with SUMO1. In Homo sapiens (Human), this protein is Early E1A protein.